Consider the following 180-residue polypeptide: Insertion element IS1296 uncharacterized 21.4 kDa protein (180 aa).

The protein belongs to the IS150/IS1296 orfA family.

This is Insertion element IS1296 uncharacterized 21.4 kDa protein from Mycoplasma mycoides subsp. mycoides SC.